Reading from the N-terminus, the 667-residue chain is Bifunctional polymyxin resistance protein ArnA (667 aa).

The interval 1–304 (MKAIVFAYHD…EMGIVTDVRL (304 aa)) is formyltransferase ArnAFT. The active-site Proton donor; for formyltransferase activity is the His104. Residues Arg114 and 136 to 140 (VKKAD) each bind (6R)-10-formyltetrahydrofolate. The tract at residues 314–667 (RRTRVLILGV…TAAPKDELNA (354 aa)) is dehydrogenase ArnADH. Residues Asp347 and 368-369 (DI) each bind NAD(+). Residues Ala393, Tyr398, and 432–433 (TS) each bind UDP-alpha-D-glucuronate. The active-site Proton acceptor; for decarboxylase activity is Glu434. Residues Arg460, Asn492, 526-535 (KLVDGGAQKR), and Tyr613 each bind UDP-alpha-D-glucuronate. Residue Arg619 is the Proton donor; for decarboxylase activity of the active site.

In the N-terminal section; belongs to the Fmt family. UDP-L-Ara4N formyltransferase subfamily. This sequence in the C-terminal section; belongs to the NAD(P)-dependent epimerase/dehydratase family. UDP-glucuronic acid decarboxylase subfamily. Homohexamer, formed by a dimer of trimers.

It carries out the reaction UDP-alpha-D-glucuronate + NAD(+) = UDP-beta-L-threo-pentopyranos-4-ulose + CO2 + NADH. It catalyses the reaction UDP-4-amino-4-deoxy-beta-L-arabinose + (6R)-10-formyltetrahydrofolate = UDP-4-deoxy-4-formamido-beta-L-arabinose + (6S)-5,6,7,8-tetrahydrofolate + H(+). The protein operates within nucleotide-sugar biosynthesis; UDP-4-deoxy-4-formamido-beta-L-arabinose biosynthesis; UDP-4-deoxy-4-formamido-beta-L-arabinose from UDP-alpha-D-glucuronate: step 1/3. It participates in nucleotide-sugar biosynthesis; UDP-4-deoxy-4-formamido-beta-L-arabinose biosynthesis; UDP-4-deoxy-4-formamido-beta-L-arabinose from UDP-alpha-D-glucuronate: step 3/3. It functions in the pathway bacterial outer membrane biogenesis; lipopolysaccharide biosynthesis. In terms of biological role, bifunctional enzyme that catalyzes the oxidative decarboxylation of UDP-glucuronic acid (UDP-GlcUA) to UDP-4-keto-arabinose (UDP-Ara4O) and the addition of a formyl group to UDP-4-amino-4-deoxy-L-arabinose (UDP-L-Ara4N) to form UDP-L-4-formamido-arabinose (UDP-L-Ara4FN). The modified arabinose is attached to lipid A and is required for resistance to polymyxin and cationic antimicrobial peptides. The protein is Bifunctional polymyxin resistance protein ArnA of Yersinia pseudotuberculosis serotype O:3 (strain YPIII).